Here is a 230-residue protein sequence, read N- to C-terminus: Flagellar L-ring protein (230 aa).

The signal sequence occupies residues 1–21 (MMLKTVLRLPVCAALLALAAG). A lipid anchor (N-palmitoyl cysteine) is attached at cysteine 22. The S-diacylglycerol cysteine moiety is linked to residue cysteine 22. The tract at residues 34 to 53 (PLTAPPPPPPQPSARPNGSI) is disordered. The span at 36–46 (TAPPPPPPQPS) shows a compositional bias: pro residues.

The protein belongs to the FlgH family. The basal body constitutes a major portion of the flagellar organelle and consists of four rings (L,P,S, and M) mounted on a central rod.

It localises to the cell outer membrane. The protein resides in the bacterial flagellum basal body. Assembles around the rod to form the L-ring and probably protects the motor/basal body from shearing forces during rotation. The polypeptide is Flagellar L-ring protein (Bordetella parapertussis (strain 12822 / ATCC BAA-587 / NCTC 13253)).